Here is a 182-residue protein sequence, read N- to C-terminus: Large ribosomal subunit protein uL6 (182 aa).

The protein belongs to the universal ribosomal protein uL6 family. Part of the 50S ribosomal subunit.

Functionally, this protein binds to the 23S rRNA, and is important in its secondary structure. It is located near the subunit interface in the base of the L7/L12 stalk, and near the tRNA binding site of the peptidyltransferase center. The polypeptide is Large ribosomal subunit protein uL6 (Trichormus variabilis (strain ATCC 29413 / PCC 7937) (Anabaena variabilis)).